The chain runs to 585 residues: Bestrophin-1 (585 aa).

The Cytoplasmic portion of the chain corresponds to 1-31 (MTITYTSQVANARLGSFSRLLLCWRGSIYKL). Position 10 (alanine 10) interacts with Ca(2+). A helical membrane pass occupies residues 32 to 51 (LYGEFLIFLLCYYIIRFIYR). The Extracellular portion of the chain corresponds to 52–60 (LALTEEQQL). Residues 61–82 (MFEKLTLYCDSYIQLIPISFVL) traverse the membrane as a helical segment. Topologically, residues 83–237 (GFYVTLVVTR…DWISIPLVYT (155 aa)) are cytoplasmic. The helical transmembrane segment at 238–255 (QVVTVAVYSFFLTCLVGR) threads the bilayer. Residues 256 to 274 (QFLNPAKAYPGHELDLVVP) lie on the Extracellular side of the membrane. A helical membrane pass occupies residues 275 to 288 (VFTFLQFFFYVGWL). The Cytoplasmic segment spans residues 289–585 (KVAEQLINPF…ALENRDEAHS (297 aa)). Ca(2+) contacts are provided by glutamine 293, asparagine 296, aspartate 301, and aspartate 304. The segment at 346-379 (PYTAASAQFRRASFMGSTFNISLNKEEMEFQPNQ) is auto-inhibitory segment.

This sequence belongs to the anion channel-forming bestrophin (TC 1.A.46) family. Calcium-sensitive chloride channel subfamily. Interacts with YWHAG; this interaction promotes the ligand-gated L-glutamate channel activity leading to the positive regulation of NMDA glutamate receptor activity through the L-glutamate secretion. In terms of tissue distribution, predominantly expressed in the basolateral membrane of the retinal pigment epithelium.

The protein resides in the cell membrane. It is found in the basolateral cell membrane. It carries out the reaction chloride(in) = chloride(out). It catalyses the reaction hydrogencarbonate(in) = hydrogencarbonate(out). The enzyme catalyses 4-aminobutanoate(in) = 4-aminobutanoate(out). The catalysed reaction is L-glutamate(out) = L-glutamate(in). With respect to regulation, inactivated by sulfhydryl-reactive agents. Functionally, ligand-gated anion channel that allows the movement of anions across cell membranes when activated by calcium (Ca2+). Allows the movement of chloride and hydrogencarbonate. Found in a partially open conformation leading to significantly smaller chloride movement. Upon F2R/PAR-1 activation, the sequestered calcium is released into the cytosol of astrocytes, leading to the (Ca2+)-dependent release of L-glutamate into the synaptic cleft that targets the neuronal postsynaptic GRIN2A/NMDAR receptor resulting in the synaptic plasticity regulation. Upon activation of the norepinephrine-alpha-1 adrenergic receptor signaling pathway, transports as well D-serine than L-glutamate in a (Ca2+)-dependent manner, leading to activation of adjacent NMDAR receptors and therefore regulates the heterosynaptic long-term depression and metaplasticity during initial memory acquisition. Releases the 4-aminobutanoate neurotransmitter in a (Ca2+)-dependent manner, and participates in its tonic release from cerebellar glial cells. This Homo sapiens (Human) protein is Bestrophin-1.